A 236-amino-acid chain; its full sequence is 2,3,4,5-tetrahydropyridine-2,6-dicarboxylate N-acetyltransferase (236 aa).

Belongs to the transferase hexapeptide repeat family. DapH subfamily.

The catalysed reaction is (S)-2,3,4,5-tetrahydrodipicolinate + acetyl-CoA + H2O = L-2-acetamido-6-oxoheptanedioate + CoA. Its pathway is amino-acid biosynthesis; L-lysine biosynthesis via DAP pathway; LL-2,6-diaminopimelate from (S)-tetrahydrodipicolinate (acetylase route): step 1/3. Functionally, catalyzes the transfer of an acetyl group from acetyl-CoA to tetrahydrodipicolinate. This is 2,3,4,5-tetrahydropyridine-2,6-dicarboxylate N-acetyltransferase from Listeria monocytogenes serotype 4b (strain CLIP80459).